The following is a 387-amino-acid chain: Krueppel-like factor 17 (387 aa).

Disordered stretches follow at residues Phe28–Val54, Ser213–Ser234, and Arg257–Ser277. Positions Asp30 to Arg46 are enriched in polar residues. The segment covering Arg257 to Ser270 has biased composition (basic and acidic residues). 3 C2H2-type zinc fingers span residues Tyr280–His304, Tyr310–His334, and His340–His362. The interval Gln357–Leu387 is disordered.

The protein belongs to the Sp1 C2H2-type zinc-finger protein family.

Its subcellular location is the nucleus. Functionally, transcription repressor that binds to the promoter of target genes and prevents their expression. Acts as a negative regulator of epithelial-mesenchymal transition and metastasis in breast cancer. Specifically binds the 5'-CACCC-3' sequence in the promoter of ID1, a key metastasis regulator in breast cancer, and repress its expression. May be a germ cell-specific transcription factor that plays important roles in spermatid differentiation and oocyte development. This chain is Krueppel-like factor 17 (KLF17), found in Sus scrofa (Pig).